A 338-amino-acid chain; its full sequence is Glyceraldehyde-3-phosphate dehydrogenase (338 aa).

NAD(+) contacts are provided by residues 12–13 (RI), aspartate 38, and serine 125. D-glyceraldehyde 3-phosphate-binding positions include 155 to 157 (SCT), threonine 186, 216 to 217 (TG), and arginine 239. The active-site Nucleophile is the cysteine 156. Residue asparagine 320 coordinates NAD(+).

This sequence belongs to the glyceraldehyde-3-phosphate dehydrogenase family. In terms of assembly, homotetramer.

The protein resides in the cytoplasm. The catalysed reaction is D-glyceraldehyde 3-phosphate + phosphate + NAD(+) = (2R)-3-phospho-glyceroyl phosphate + NADH + H(+). It functions in the pathway carbohydrate degradation; glycolysis; pyruvate from D-glyceraldehyde 3-phosphate: step 1/5. In terms of biological role, catalyzes the oxidative phosphorylation of glyceraldehyde 3-phosphate (G3P) to 1,3-bisphosphoglycerate (BPG) using the cofactor NAD. The first reaction step involves the formation of a hemiacetal intermediate between G3P and a cysteine residue, and this hemiacetal intermediate is then oxidized to a thioester, with concomitant reduction of NAD to NADH. The reduced NADH is then exchanged with the second NAD, and the thioester is attacked by a nucleophilic inorganic phosphate to produce BPG. In Lactobacillus delbrueckii subsp. bulgaricus, this protein is Glyceraldehyde-3-phosphate dehydrogenase (gap).